The following is a 455-amino-acid chain: Oxidative stress induced growth inhibitor homolog osgn-1 (455 aa).

This sequence belongs to the OKL38 family. NADPH serves as cofactor.

It is found in the midbody. Functionally, monooxygenase catalytic activity. Involved in regulation of cytokinesis; promotes rho-1/RhoA activity, probably acting locally at the midbody in late cytokinesis. Monooxygenase activity is required to stabilize structures between primordial germ cells (PGCs), termed intercellular bridges. Dispensable for fertility. This chain is Oxidative stress induced growth inhibitor homolog osgn-1, found in Caenorhabditis elegans.